A 345-amino-acid polypeptide reads, in one-letter code: L-Ala-D/L-Glu epimerase (345 aa).

2 residues coordinate substrate: threonine 134 and lysine 159. Lysine 161 acts as the Proton acceptor; specific for (R)-substrate epimerization in catalysis. Aspartate 188 lines the Mg(2+) pocket. Residue asparagine 190 participates in substrate binding. Residues glutamate 216 and aspartate 241 each contribute to the Mg(2+) site. Lysine 265 (proton acceptor; specific for (S)-substrate epimerization) is an active-site residue. Cysteine 292, aspartate 317, and aspartate 319 together coordinate substrate.

It belongs to the mandelate racemase/muconate lactonizing enzyme family. The cofactor is Mg(2+).

It catalyses the reaction L-alanyl-L-glutamate = L-alanyl-D-glutamate. It participates in cell wall degradation; peptidoglycan degradation. Catalyzes the epimerization of L-Ala-D-Glu to L-Ala-L-Glu and has probably a role in the metabolism of the murein peptide, of which L-Ala-D-Glu is a component. Is also able to catalyze the reverse reaction and the epimerization of a broad range of other dipeptides; is most efficient with L-Ala-D/L-Phe, L-Ala-D/L-Tyr, and L-Ala-D/L-His. This chain is L-Ala-D/L-Glu epimerase, found in Thermotoga maritima (strain ATCC 43589 / DSM 3109 / JCM 10099 / NBRC 100826 / MSB8).